Here is a 703-residue protein sequence, read N- to C-terminus: Heat shock protein 75 kDa, mitochondrial (703 aa).

The transit peptide at 1 to 56 (MARELRMLLLWGRRLRAPALAAACGGKPVLCPWRPPAQSWGPPRSLASSFHVGRPF) directs the protein to the mitochondrion. ATP contacts are provided by Asn-118 and Asp-157. Ser-169 carries the post-translational modification Phosphoserine. Position 170 (Asn-170) interacts with ATP. The residue at position 173 (Thr-173) is a Phosphothreonine. Residues Phe-204 and Arg-401 each contribute to the ATP site. Lys-423, Lys-430, and Lys-465 each carry N6-acetyllysine. Position 493 is a phosphothreonine (Thr-493).

It belongs to the heat shock protein 90 family. In terms of assembly, binds to the intracellular domain of tumor necrosis factor type 1 receptor. Binds to RB1. Interacts with SRC. Interacts with SDHA.

Its subcellular location is the mitochondrion. It is found in the mitochondrion inner membrane. The protein localises to the mitochondrion matrix. Functionally, chaperone that expresses an ATPase activity. Involved in maintaining mitochondrial function and polarization, downstream of PINK1 and mitochondrial complex I. Is a negative regulator of mitochondrial respiration able to modulate the balance between oxidative phosphorylation and aerobic glycolysis. The impact of TRAP1 on mitochondrial respiration is probably mediated by modulation of mitochondrial SRC and inhibition of SDHA. In Bos taurus (Bovine), this protein is Heat shock protein 75 kDa, mitochondrial (TRAP1).